The primary structure comprises 1282 residues: Crescerin-like protein che-12 (1282 aa).

TOG stretches follow at residues 33-240 and 268-515; these read DFDT…EHTE and PSLV…MDSF. HEAT repeat units lie at residues 59 to 96, 100 to 137, 162 to 209, 261 to 300, 308 to 345, 349 to 386, 388 to 421, and 424 to 461; these read QKKG…TFGS, YCMC…LKPE, ELHH…FIGN, RLRF…QITP, PHLH…HLKG, AHIQ…NINP, TVGG…TISP, and FNLQ…LLNG. Residues 566 to 714 are disordered; that stretch reads IQQQGQAEKP…RSFDDRPAKA (149 aa). Composition is skewed to low complexity over residues 575-592 and 633-644; these read PSFS…HQAQ and SAASNPNSSTSS. The segment covering 702 to 712 has biased composition (basic and acidic residues); it reads DPPRSFDDRPA. 2 TOG regions span residues 800–1022 and 1066–1282; these read NMSV…ANVE and TELL…ALIR. 7 HEAT repeats span residues 838–875, 879–917, 919–953, 961–998, 1095–1132, 1177–1214, and 1219–1258; these read DNLK…NLNS, SEME…AATA, KALQ…IQGS, NALS…DPNF, ASDT…SMAK, IEPV…LAYK, and QVEV…LIGE.

It belongs to the Crescerin family. As to expression, detected in a subset of amphid neurons that lack wing- or finger-like ciliary extensions. Likewise, detected in phasmid neurons.

The protein localises to the cell projection. The protein resides in the cilium. Its subcellular location is the perikaryon. It is found in the dendrite. Required for normal structure and function of sensory cilia on amphid neurons, especially for the formation of distal ciliary structures, but is less important for normal assembly of middle and basal ciliary structures. Plays a role in the organization of axoneme microtubule bundles in sensory cilia. Required for normal structure and function of the ASER neuron that mediates attraction to NaCl. Required for normal chemotaxis to NaCl. Required for normal avoidance response to high osmolarity. In contrast, is not required for normal chemotaxis to isoamyl alcohol. Does not play a role in intraflagella transport (IFT). Promotes dauer formation in response to pheromones such as the ascarosides ascr#2, ascr#3, ascr#5, ascr#8 and icas#9. This Caenorhabditis elegans protein is Crescerin-like protein che-12.